The chain runs to 155 residues: Small ribosomal subunit protein uS7c (155 aa).

This sequence belongs to the universal ribosomal protein uS7 family. In terms of assembly, part of the 30S ribosomal subunit.

It is found in the plastid. It localises to the chloroplast. Its function is as follows. One of the primary rRNA binding proteins, it binds directly to 16S rRNA where it nucleates assembly of the head domain of the 30S subunit. The protein is Small ribosomal subunit protein uS7c (rps7) of Cabomba caroliniana (Carolina fanwort).